The sequence spans 254 residues: MNITHVPEIHRTDKQHTENLRHWRKILGIAPFVSIVFPAIMYFISDEDSFKKSLLLRFITILLPFSYSAVQYAILLHTTPYYTLNLLFLAFAAISILSITALPINEWKGDDSLIFSIVLPSLFIPPTYLLSTSCRLVPGQTAFTDTGINVLIDILILLCPLVSLVLVCKEPEYRLLSAVPFPILILARLLNDRYCPSEKSAPPTAPWRVAILVLILTSAALIYAFMMWTPIAILNGYFGLLHKLRESFLSLRPD.

The protein belongs to the UPF0328 family.

This is UPF0328 protein ECU01_0070/ECU01_1540/ECU02_1570/ECU04_0080/ECU08_2100 from Encephalitozoon cuniculi (strain GB-M1) (Microsporidian parasite).